The sequence spans 392 residues: Sulfate adenylyltransferase (392 aa).

Belongs to the sulfate adenylyltransferase family.

The catalysed reaction is sulfate + ATP + H(+) = adenosine 5'-phosphosulfate + diphosphate. It functions in the pathway sulfur metabolism; hydrogen sulfide biosynthesis; sulfite from sulfate: step 1/3. The chain is Sulfate adenylyltransferase from Trichormus variabilis (strain ATCC 29413 / PCC 7937) (Anabaena variabilis).